The chain runs to 1940 residues: Myosin-1B (1940 aa).

A Myosin N-terminal SH3-like domain is found at 33–82 (DAKSSVFVVHAKESYVKSTIQSKESGKVTVKTEGGETLTVKEDQIFSMNP). Positions 86–783 (DKIEDMAMMT…LLGLLEEMRD (698 aa)) constitute a Myosin motor domain. Position 130 is an N6,N6,N6-trimethyllysine (Lys130). 179–186 (GESGAGKT) contacts ATP. Actin-binding stretches follow at residues 660-682 (LNKL…IPNE) and 762-776 (KFGH…GLLG). The 30-residue stretch at 786 to 815 (LAQLITRTQARCRGFLMRVEFKKMMERRES) folds into the IQ domain. The stretch at 844 to 1940 (LLKSAESEKE…EIGKKAESEE (1097 aa)) forms a coiled coil. A disordered region spans residues 1912–1940 (EERADIAESQVNKLRAKSREIGKKAESEE). The span at 1928–1940 (KSREIGKKAESEE) shows a compositional bias: basic and acidic residues.

Belongs to the TRAFAC class myosin-kinesin ATPase superfamily. Myosin family. As to quaternary structure, muscle myosin is a hexameric protein that consists of 2 heavy chain subunits (MHC), 2 alkali light chain subunits (MLC) and 2 regulatory light chain subunits (MLC-2).

The protein localises to the cytoplasm. Its subcellular location is the myofibril. Its function is as follows. Muscle contraction. The protein is Myosin-1B (MYH1B) of Gallus gallus (Chicken).